We begin with the raw amino-acid sequence, 64 residues long: Disintegrin VB7B (64 aa).

Residues 1-64 (ELLQNSGNPC…TGISSDCPRN (64 aa)) enclose the Disintegrin domain. Intrachain disulfides connect Cys-10/Cys-33, Cys-24/Cys-30, Cys-29/Cys-54, and Cys-42/Cys-61. Positions 46-48 (KGD) match the Cell attachment site; atypical (KGD) motif.

The protein belongs to the venom metalloproteinase (M12B) family. P-II subfamily. P-IIe sub-subfamily. As to quaternary structure, heterodimer with VB7A; disulfide-linked. In terms of tissue distribution, expressed by the venom gland.

The protein resides in the secreted. Its function is as follows. Poor inhibitor of platelet aggregation. The disintegrin inhibits the adhesion of cells expressing the RGD-dependent integrin alpha-5/beta-1 (ITGA5/ITGB1) to immobilized fibronectin. Inhibition on alpha-IIb/beta-3 (ITGA2B/ITGB3) is low. The sequence is that of Disintegrin VB7B from Vipera berus berus (Common viper).